The primary structure comprises 358 residues: UDP-N-acetylglucosamine--N-acetylmuramyl-(pentapeptide) pyrophosphoryl-undecaprenol N-acetylglucosamine transferase (358 aa).

Residues 10 to 12 (TGG), N124, R165, S187, I243, and Q288 each bind UDP-N-acetyl-alpha-D-glucosamine.

Belongs to the glycosyltransferase 28 family. MurG subfamily.

It localises to the cell inner membrane. It carries out the reaction di-trans,octa-cis-undecaprenyl diphospho-N-acetyl-alpha-D-muramoyl-L-alanyl-D-glutamyl-meso-2,6-diaminopimeloyl-D-alanyl-D-alanine + UDP-N-acetyl-alpha-D-glucosamine = di-trans,octa-cis-undecaprenyl diphospho-[N-acetyl-alpha-D-glucosaminyl-(1-&gt;4)]-N-acetyl-alpha-D-muramoyl-L-alanyl-D-glutamyl-meso-2,6-diaminopimeloyl-D-alanyl-D-alanine + UDP + H(+). The protein operates within cell wall biogenesis; peptidoglycan biosynthesis. Its function is as follows. Cell wall formation. Catalyzes the transfer of a GlcNAc subunit on undecaprenyl-pyrophosphoryl-MurNAc-pentapeptide (lipid intermediate I) to form undecaprenyl-pyrophosphoryl-MurNAc-(pentapeptide)GlcNAc (lipid intermediate II). The sequence is that of UDP-N-acetylglucosamine--N-acetylmuramyl-(pentapeptide) pyrophosphoryl-undecaprenol N-acetylglucosamine transferase from Syntrophotalea carbinolica (strain DSM 2380 / NBRC 103641 / GraBd1) (Pelobacter carbinolicus).